Here is a 392-residue protein sequence, read N- to C-terminus: 6-aminohexanoate-dimer hydrolase (392 aa).

Residues 1 to 22 (MNARSTGQHPARYPGAAAGEPT) are disordered. The active site involves Ser112.

It carries out the reaction [N-(6-aminohexanoyl)](n) + H2O = [N-(6-aminohexanoyl)](n-1) + 6-aminohexanoate. The enzyme catalyses N-(6-aminohexanoyl)-6-aminohexanoate + H2O = 2 6-aminohexanoate. Its pathway is xenobiotic degradation; nylon-6 oligomer degradation. In terms of biological role, involved in nylon oligomer degradation. This Paenarthrobacter ureafaciens protein is 6-aminohexanoate-dimer hydrolase.